The primary structure comprises 529 residues: ATP synthase subunit alpha (529 aa).

ATP is bound at residue 173–180 (GDRQTGKT).

Belongs to the ATPase alpha/beta chains family. In terms of assembly, F-type ATPases have 2 components, CF(1) - the catalytic core - and CF(0) - the membrane proton channel. CF(1) has five subunits: alpha(3), beta(3), gamma(1), delta(1), epsilon(1). CF(0) has three main subunits: a(1), b(2) and c(9-12). The alpha and beta chains form an alternating ring which encloses part of the gamma chain. CF(1) is attached to CF(0) by a central stalk formed by the gamma and epsilon chains, while a peripheral stalk is formed by the delta and b chains.

It is found in the cell membrane. It carries out the reaction ATP + H2O + 4 H(+)(in) = ADP + phosphate + 5 H(+)(out). Its function is as follows. Produces ATP from ADP in the presence of a proton gradient across the membrane. The alpha chain is a regulatory subunit. This chain is ATP synthase subunit alpha, found in Streptomyces avermitilis (strain ATCC 31267 / DSM 46492 / JCM 5070 / NBRC 14893 / NCIMB 12804 / NRRL 8165 / MA-4680).